We begin with the raw amino-acid sequence, 94 residues long: Small ribosomal subunit protein bS18 (94 aa).

The protein belongs to the bacterial ribosomal protein bS18 family. Part of the 30S ribosomal subunit. Forms a tight heterodimer with protein bS6.

Its function is as follows. Binds as a heterodimer with protein bS6 to the central domain of the 16S rRNA, where it helps stabilize the platform of the 30S subunit. This chain is Small ribosomal subunit protein bS18, found in Leptospira biflexa serovar Patoc (strain Patoc 1 / Ames).